The chain runs to 157 residues: SsrA-binding protein (157 aa).

This sequence belongs to the SmpB family.

The protein localises to the cytoplasm. In terms of biological role, required for rescue of stalled ribosomes mediated by trans-translation. Binds to transfer-messenger RNA (tmRNA), required for stable association of tmRNA with ribosomes. tmRNA and SmpB together mimic tRNA shape, replacing the anticodon stem-loop with SmpB. tmRNA is encoded by the ssrA gene; the 2 termini fold to resemble tRNA(Ala) and it encodes a 'tag peptide', a short internal open reading frame. During trans-translation Ala-aminoacylated tmRNA acts like a tRNA, entering the A-site of stalled ribosomes, displacing the stalled mRNA. The ribosome then switches to translate the ORF on the tmRNA; the nascent peptide is terminated with the 'tag peptide' encoded by the tmRNA and targeted for degradation. The ribosome is freed to recommence translation, which seems to be the essential function of trans-translation. The protein is SsrA-binding protein of Elusimicrobium minutum (strain Pei191).